The sequence spans 963 residues: Ubiquitin carboxyl-terminal hydrolase 4 (963 aa).

Residues 11–122 (PDAETQKSEL…GQQPIVRKVV (112 aa)) form the DUSP domain. Residues 27–216 (TLQRGAQWYL…LYLGQVLVIE (190 aa)) are necessary for interaction with SART3. A Nuclear export signal motif is present at residues 133 to 141 (VEVYLLELK). The region spanning 142-226 (LCENSDPTNV…PQNEDGTWPR (85 aa)) is the Ubiquitin-like 1 domain. The tract at residues 220 to 255 (EDGTWPRQTLQSKSSTAPSRNFTTSPKSSASPYSSV) is disordered. The segment covering 225-243 (PRQTLQSKSSTAPSRNFTT) has biased composition (polar residues). The required for USP4 activation by providing conformational flexibility between the DUSP and catalytic domains stretch occupies residues 229-295 (LQSKSSTAPS…SYNCQEPPSS (67 aa)). Residues 244-255 (SPKSSASPYSSV) show a composition bias toward low complexity. Residues 302 to 923 (CGLGNLGNTC…AAYVLFYQRR (622 aa)) form the USP domain. Cys-311 serves as the catalytic Nucleophile. Residues 384–386 (PQF) form a regulates ubiquitin dissociation region. Residues 405 to 407 (LHE) are necessary for interaction with RBL2. Position 445 is a phosphoserine (Ser-445). The segment at 459–463 (LVCPE) is necessary for interaction with RB1 and RBL2. Zn(2+)-binding residues include Cys-461 and Cys-464. Residues 483–571 (LKKDRVMEVF…IFVYEVCSTS (89 aa)) form the Ubiquitin-like 2 domain. Positions 485–775 (KDRVMEVFLV…LQPQKKKKTT (291 aa)) are interacts with DUSP and ubiquitin-like 1 domains and is required for USP4 activation. The tract at residues 637–698 (DEFGSSPLEP…PSETTQKKIK (62 aa)) is disordered. Ser-655 is modified (phosphoserine). A compositionally biased stretch (acidic residues) spans 657–666 (EGEDEEEMEH). 2 positions are modified to phosphoserine: Ser-675 and Ser-680. A Nuclear localization signal motif is present at residues 767 to 772 (QPQKKK). Positions 799 and 802 each coordinate Zn(2+). The active-site Proton acceptor is His-881. The interval 928–963 (YKTPSLSSSGSSDGGTRPSSSQQGLGDDEACSMDTN) is disordered. Residues 932 to 948 (SLSSSGSSDGGTRPSSS) are compositionally biased toward low complexity. A compositionally biased stretch (acidic residues) spans 953–963 (GDDEACSMDTN).

This sequence belongs to the peptidase C19 family. USP4 subfamily. As to quaternary structure, interacts with RB1 (both dephosphorylated and hypophosphorylated forms). Interacts with RBL1 and RBL2. Interacts with ADORA2A (via cytoplasmic C-terminus); the interaction is direct. Interacts with SART3; recruits USP4 to its substrate PRPF3. Post-translationally, phosphorylated at Ser-445 by PKB/AKT1 in response to EGF stimulus, promoting its ability deubiquitinate RHEB. In terms of processing, monoubiquitinated by TRIM21. Ubiquitination does not lead to its proteasomal degradation. Autodeubiquitinated.

The protein localises to the cytoplasm. The protein resides in the nucleus. It carries out the reaction Thiol-dependent hydrolysis of ester, thioester, amide, peptide and isopeptide bonds formed by the C-terminal Gly of ubiquitin (a 76-residue protein attached to proteins as an intracellular targeting signal).. Its activity is regulated as follows. The completion of the deubiquitinase reaction is mediated by the DUSP and ubiquitin-like 1 domains which promotes the release of ubiquitin from the catalytic site enabling subsequent reactions to occur. Deubiquitinating enzyme that removes conjugated ubiquitin from target proteins. Deubiquitinates PDPK1. Deubiquitinates TRIM21. Deubiquitinates receptor ADORA2A which increases the amount of functional receptor at the cell surface. Deubiquitinates HAS2. Deubiquitinates RHEB in response to EGF signaling, promoting mTORC1 signaling. May regulate mRNA splicing through deubiquitination of the U4 spliceosomal protein PRPF3. This may prevent its recognition by the U5 component PRPF8 thereby destabilizing interactions within the U4/U6.U5 snRNP. May also play a role in the regulation of quality control in the ER. This is Ubiquitin carboxyl-terminal hydrolase 4 (USP4) from Pongo abelii (Sumatran orangutan).